The following is a 712-amino-acid chain: Auxin response factor 15 (712 aa).

The segment at residues Phe142–Ala244 is a DNA-binding region (TF-B3).

The protein belongs to the ARF family. As to quaternary structure, homo and heterodimers. In terms of tissue distribution, expressed in roots, culms, leaves and young panicles.

The protein localises to the nucleus. Its function is as follows. Auxin response factors (ARFs) are transcriptional factors that bind specifically to the DNA sequence 5'-TGTCTC-3' found in the auxin-responsive promoter elements (AuxREs). The polypeptide is Auxin response factor 15 (ARF15) (Oryza sativa subsp. japonica (Rice)).